We begin with the raw amino-acid sequence, 562 residues long: Putative transport protein YE1478 (562 aa).

Transmembrane regions (helical) follow at residues 8–28, 32–52, 66–86, 94–114, 118–138, and 158–178; these read LLNG…LCLG, LGPI…LLGQ, FMLF…SIFF, MLAL…GKLF, IGLT…LVGA, and NLSL…ILGA. 2 consecutive RCK C-terminal domains span residues 202 to 288 and 290 to 373; these read LDTD…SFRN and KEVF…KIGF. A run of 5 helical transmembrane segments spans residues 383-403, 406-426, 447-467, 475-495, and 541-561; these read LLAF…TFQF, FSFG…LGFL, FGLM…INSS, MLIS…IFGA, and IANV…PGIL.

The protein belongs to the AAE transporter (TC 2.A.81) family. YbjL subfamily.

It is found in the cell membrane. This Yersinia enterocolitica serotype O:8 / biotype 1B (strain NCTC 13174 / 8081) protein is Putative transport protein YE1478.